Consider the following 319-residue polypeptide: 4-hydroxy-3-methylbut-2-enyl diphosphate reductase (319 aa).

Cys17 lines the [4Fe-4S] cluster pocket. Residues His46 and His79 each coordinate (2E)-4-hydroxy-3-methylbut-2-enyl diphosphate. The dimethylallyl diphosphate site is built by His46 and His79. 2 residues coordinate isopentenyl diphosphate: His46 and His79. Cys101 is a binding site for [4Fe-4S] cluster. His129 is a (2E)-4-hydroxy-3-methylbut-2-enyl diphosphate binding site. His129 serves as a coordination point for dimethylallyl diphosphate. His129 contributes to the isopentenyl diphosphate binding site. The active-site Proton donor is the Glu131. Thr170 contributes to the (2E)-4-hydroxy-3-methylbut-2-enyl diphosphate binding site. Cys200 provides a ligand contact to [4Fe-4S] cluster. Residues Ser228, Ser229, Asn230, and Ser273 each coordinate (2E)-4-hydroxy-3-methylbut-2-enyl diphosphate. The dimethylallyl diphosphate site is built by Ser228, Ser229, Asn230, and Ser273. Residues Ser228, Ser229, Asn230, and Ser273 each contribute to the isopentenyl diphosphate site.

This sequence belongs to the IspH family. The cofactor is [4Fe-4S] cluster.

It catalyses the reaction isopentenyl diphosphate + 2 oxidized [2Fe-2S]-[ferredoxin] + H2O = (2E)-4-hydroxy-3-methylbut-2-enyl diphosphate + 2 reduced [2Fe-2S]-[ferredoxin] + 2 H(+). It carries out the reaction dimethylallyl diphosphate + 2 oxidized [2Fe-2S]-[ferredoxin] + H2O = (2E)-4-hydroxy-3-methylbut-2-enyl diphosphate + 2 reduced [2Fe-2S]-[ferredoxin] + 2 H(+). It participates in isoprenoid biosynthesis; dimethylallyl diphosphate biosynthesis; dimethylallyl diphosphate from (2E)-4-hydroxy-3-methylbutenyl diphosphate: step 1/1. The protein operates within isoprenoid biosynthesis; isopentenyl diphosphate biosynthesis via DXP pathway; isopentenyl diphosphate from 1-deoxy-D-xylulose 5-phosphate: step 6/6. Functionally, catalyzes the conversion of 1-hydroxy-2-methyl-2-(E)-butenyl 4-diphosphate (HMBPP) into a mixture of isopentenyl diphosphate (IPP) and dimethylallyl diphosphate (DMAPP). Acts in the terminal step of the DOXP/MEP pathway for isoprenoid precursor biosynthesis. In Cereibacter sphaeroides (strain ATCC 17029 / ATH 2.4.9) (Rhodobacter sphaeroides), this protein is 4-hydroxy-3-methylbut-2-enyl diphosphate reductase.